We begin with the raw amino-acid sequence, 185 residues long: Prorelaxin H1 (185 aa).

The first 22 residues, 1–22 (MPRLFLFHLLEFCLLLNQFSRA), serve as a signal peptide directing secretion. 3 disulfide bridges follow: Cys35/Cys172, Cys47/Cys185, and Cys171/Cys176. The propeptide at 56–158 (SLSQEDAPQT…KYLGLDTHSQ (103 aa)) is connecting peptide.

The protein belongs to the insulin family. As to quaternary structure, heterodimer of a B chain and an A chain linked by two disulfide bonds. In terms of tissue distribution, prostate. Not expressed in placenta, decidua or ovary.

The protein localises to the secreted. Its function is as follows. Relaxin is an ovarian hormone that acts with estrogen to produce dilatation of the birth canal in many mammals. May be involved in remodeling of connective tissues during pregnancy, promoting growth of pubic ligaments and ripening of the cervix. The polypeptide is Prorelaxin H1 (RLN1) (Homo sapiens (Human)).